The chain runs to 95 residues: Large ribosomal subunit protein eL30 (95 aa).

It belongs to the eukaryotic ribosomal protein eL30 family.

This is Large ribosomal subunit protein eL30 from Methanospirillum hungatei JF-1 (strain ATCC 27890 / DSM 864 / NBRC 100397 / JF-1).